Here is a 713-residue protein sequence, read N- to C-terminus: Glutamine--fructose-6-phosphate aminotransferase [isomerizing] (713 aa).

Catalysis depends on Cys2, which acts as the For GATase activity. The 315-residue stretch at 2–316 folds into the Glutamine amidotransferase type-2 domain; the sequence is CGIFGYVNFL…DDDIAHIYDG (315 aa). 2 consecutive SIS domains span residues 389 to 528 and 561 to 703; these read WLST…DSIS and CNSS…VDFP.

Homotetramer.

The catalysed reaction is D-fructose 6-phosphate + L-glutamine = D-glucosamine 6-phosphate + L-glutamate. Its pathway is nucleotide-sugar biosynthesis; UDP-N-acetyl-alpha-D-glucosamine biosynthesis; alpha-D-glucosamine 6-phosphate from D-fructose 6-phosphate: step 1/1. Functionally, involved in amino sugar synthesis (formation of chitin, supplies the amino sugars of asparagine-linked oligosaccharides of glycoproteins). This Candida albicans (strain SC5314 / ATCC MYA-2876) (Yeast) protein is Glutamine--fructose-6-phosphate aminotransferase [isomerizing] (GFA1).